The following is a 260-amino-acid chain: Dolichol-phosphate mannosyltransferase subunit 1 (260 aa).

The disordered stretch occupies residues 1–25; the sequence is MASTGASRSLAASPRPPQGRSSRQD. Alanine 2 is subject to N-acetylalanine. A phosphoserine mark is found at serine 3 and serine 9. Residues proline 32, tyrosine 34, glutamate 36, isoleucine 63, aspartate 65, aspartate 118, alanine 119, aspartate 120, arginine 147, arginine 234, and lysine 240 each coordinate GDP-alpha-D-mannose. Aspartate 120 provides a ligand contact to Mg(2+). Aspartate 120 serves as a coordination point for Mn(2+).

This sequence belongs to the glycosyltransferase 2 family. In terms of assembly, component of the dolichol-phosphate mannose (DPM) synthase complex composed of DPM1, DPM2 and DPM3; within the complex, directly interacts with DPM3. This interaction may stabilize DPM1. The cofactor is Mg(2+). Mn(2+) serves as cofactor. Requires Ca(2+) as cofactor.

The protein resides in the endoplasmic reticulum. The catalysed reaction is a di-trans,poly-cis-dolichyl phosphate + GDP-alpha-D-mannose = a di-trans,poly-cis-dolichyl beta-D-mannosyl phosphate + GDP. It participates in protein modification; protein glycosylation. In terms of biological role, transfers mannose from GDP-mannose to dolichol monophosphate to form dolichol phosphate mannose (Dol-P-Man) which is the mannosyl donor in pathways leading to N-glycosylation, glycosyl phosphatidylinositol membrane anchoring, and O-mannosylation of proteins; catalytic subunit of the dolichol-phosphate mannose (DPM) synthase complex. The polypeptide is Dolichol-phosphate mannosyltransferase subunit 1 (Dpm1) (Mus musculus (Mouse)).